We begin with the raw amino-acid sequence, 270 residues long: NADPH-dependent 7-cyano-7-deazaguanine reductase (270 aa).

Position 79–81 (79–81 (IES)) interacts with substrate. 81–82 (SK) provides a ligand contact to NADPH. Catalysis depends on cysteine 177, which acts as the Thioimide intermediate. The active-site Proton donor is the aspartate 184. 216 to 217 (HE) contributes to the substrate binding site. 245–246 (RG) contributes to the NADPH binding site.

This sequence belongs to the GTP cyclohydrolase I family. QueF type 2 subfamily. In terms of assembly, homodimer.

It localises to the cytoplasm. The enzyme catalyses 7-aminomethyl-7-carbaguanine + 2 NADP(+) = 7-cyano-7-deazaguanine + 2 NADPH + 3 H(+). Its pathway is tRNA modification; tRNA-queuosine biosynthesis. Functionally, catalyzes the NADPH-dependent reduction of 7-cyano-7-deazaguanine (preQ0) to 7-aminomethyl-7-deazaguanine (preQ1). The polypeptide is NADPH-dependent 7-cyano-7-deazaguanine reductase (Acinetobacter baumannii (strain ATCC 17978 / DSM 105126 / CIP 53.77 / LMG 1025 / NCDC KC755 / 5377)).